We begin with the raw amino-acid sequence, 369 residues long: Methionine import ATP-binding protein MetN 1 (369 aa).

Positions 29–265 constitute an ABC transporter domain; sequence IRLHGLGKRY…PRHAVTRSLL (237 aa). 62-69 provides a ligand contact to ATP; it reads GRSGAGKS.

Belongs to the ABC transporter superfamily. Methionine importer (TC 3.A.1.24) family. The complex is composed of two ATP-binding proteins (MetN), two transmembrane proteins (MetI) and a solute-binding protein (MetQ).

It localises to the cell inner membrane. The catalysed reaction is L-methionine(out) + ATP + H2O = L-methionine(in) + ADP + phosphate + H(+). It catalyses the reaction D-methionine(out) + ATP + H2O = D-methionine(in) + ADP + phosphate + H(+). Its function is as follows. Part of the ABC transporter complex MetNIQ involved in methionine import. Responsible for energy coupling to the transport system. This Pseudomonas aeruginosa (strain ATCC 15692 / DSM 22644 / CIP 104116 / JCM 14847 / LMG 12228 / 1C / PRS 101 / PAO1) protein is Methionine import ATP-binding protein MetN 1.